A 1675-amino-acid chain; its full sequence is Clathrin heavy chain 1 (1675 aa).

Position 2 is an N-acetylalanine (A2). The interval 2-479 is globular terminal domain; the sequence is AQILPIRFQE…VDPTLALSVY (478 aa). WD40-like repeat stretches follow at residues 24–67, 68–107, 108–149, 150–195, 196–257, 258–301, and 302–330; these read NIGF…RPIS, ADSAIMNPASKVIALKAGKTLQIFNIEMKSKMKAHTMTDD, VTFW…SSLA, GCQI…QPIE, GHAA…PEAQ, NDFP…ISGE, and TIFVTAPHEATAGIIGVNRKGQVLSVCVE. S67 is subject to Phosphoserine. T105 carries the phosphothreonine modification. At Y184 the chain carries Phosphotyrosine. Phosphothreonine is present on T394. The interval 449 to 465 is binding site for the uncoating ATPase, involved in lattice disassembly; sequence EKWLKEDKLECSEELGD. Residues 480 to 523 form a flexible linker region; the sequence is LRANVPNKVIQCFAETGQVQKIVLYAKKVGYTPDWIFLLRNVMR. The interval 524-634 is distal segment; sequence ISPDQGQQFA…RALEHFTDLY (111 aa). The segment at 524–1675 is heavy chain arm; the sequence is ISPDQGQQFA…QPQPGFGYSM (1152 aa). 7 CHCR repeats span residues 537–683, 686–828, 833–972, 979–1124, 1128–1269, 1274–1420, and 1423–1566; these read VQDE…QICV, ASKY…SEDV, ILVV…PLID, LSET…VKEA, YIKA…FRLA, LHIV…LLLN, and LMVL…RECF. At Y634 the chain carries Phosphotyrosine. The segment at 639–1675 is proximal segment; the sequence is AVVHTHLLNP…QPQPGFGYSM (1037 aa). An N6-succinyllysine modification is found at K737. K856 carries the N6-acetyllysine modification. Position 899 is a phosphotyrosine (Y899). S1167 carries the phosphoserine modification. At Y1206 the chain carries Phosphotyrosine. The interval 1213 to 1522 is involved in binding clathrin light chain; that stretch reads AAKLLYNNVS…YLFKGNNRWK (310 aa). Residue S1229 is modified to Phosphoserine. K1441 bears the N6-acetyllysine; alternate mark. At K1441 the chain carries N6-succinyllysine; alternate. Residues Y1477 and Y1487 each carry the phosphotyrosine modification. A Phosphoserine modification is found at S1494. At K1501 the chain carries N6-acetyllysine. The interval 1550-1675 is trimerization; sequence AEELLQWFLQ…QPQPGFGYSM (126 aa).

It belongs to the clathrin heavy chain family. In terms of assembly, clathrin triskelions, composed of 3 heavy chains and 3 light chains, are the basic subunits of the clathrin coat. In the presence of light chains, hub assembly is influenced by both the pH and the concentration of calcium. Interacts with HIP1. Interacts with DENND1A, DENND1B and DENND1C. Interacts with OCRL. Interacts with ERBB2. Interacts with FKBP6. Interacts with CKAP5 and TACC3 forming the TACC3/ch-TOG/clathrin complex located at spindle inter-microtubules bridges; the complex implicates clathrin triskelions; TACC3 and CLTC are proposed to form a composite microtubule interaction surface. Interacts with ATG16L1 (via N-terminus). Interacts with RFTN1; the interaction occurs in response to pathogens. Interacts with TMEM106B (via N-terminus). Interacts with DNAJC6; this interaction produces a local change in heavy-chain contacts, creating a detectable global distortion of the clathrin coat and leads to the recruitment of HSPA8.

Its subcellular location is the cytoplasmic vesicle membrane. It localises to the membrane. The protein resides in the coated pit. It is found in the melanosome. The protein localises to the cytoplasm. Its subcellular location is the cytoskeleton. It localises to the spindle. Its function is as follows. Clathrin is the major protein of the polyhedral coat of coated pits and vesicles. Two different adapter protein complexes link the clathrin lattice either to the plasma membrane or to the trans-Golgi network. Acts as a component of the TACC3/ch-TOG/clathrin complex proposed to contribute to stabilization of kinetochore fibers of the mitotic spindle by acting as inter-microtubule bridge. The TACC3/ch-TOG/clathrin complex is required for the maintenance of kinetochore fiber tension. Plays a role in early autophagosome formation. Interaction with DNAJC6 mediates the recruitment of HSPA8 to the clathrin lattice and creates local destabilization of the lattice promoting uncoating. The protein is Clathrin heavy chain 1 of Bos taurus (Bovine).